Consider the following 480-residue polypeptide: MSPQTETKASVGFKAGVKDYKLTYYTPDYETKDTDILAAFRVTPQPGVPPEEAGAAVAAESSTGTWTTVWTDGLTSLDRYKGRCYHIEVVVGEENQYIAYVAYPLDLFEEGSVTNMFTSIVGNVFGFKALRALRLEDLRIPPSYSKTFQGPPHGIQVERDKLNKYGRPLLGCTIKPKLGLSAKNYGRAVYECLRGGLDFTKDDENVNSQPFMRWRDRFLFCAEAIYKAQAETGEIKGHYLNATAGTCEEMIKRAVFARELGVPIVMHDYLTGGFTANTSLAHYCRDNGLLLHIHRAMHAVIDRQKNHGMHFRVLAKALRMSGGDHIHAGTVVGKLEGEREMTLGFVDLLRDDYIEKDRSRGIFFTQDWVSMPGVIPVASGGIHVWHMPALTEIFGDDSVLQFGGGTLGHPWGNAPGAVANRVALEACVQARNEGRDLAREGNDIIREASKWSPELAAACEVWKEITFDFDPVDKPDIEAK.

Residues 1–2 (MS) constitute a propeptide that is removed on maturation. P3 carries the N-acetylproline modification. K14 carries the post-translational modification N6,N6,N6-trimethyllysine. N123 and T173 together coordinate substrate. K175 (proton acceptor) is an active-site residue. A substrate-binding site is contributed by K177. Mg(2+) contacts are provided by K201, D203, and E204. K201 carries the post-translational modification N6-carboxylysine. The Proton acceptor role is filled by H294. Substrate-binding residues include R295, H327, and S379.

The protein belongs to the RuBisCO large chain family. Type I subfamily. Heterohexadecamer of 8 large chains and 8 small chains; disulfide-linked. The disulfide link is formed within the large subunit homodimers. The cofactor is Mg(2+). In terms of processing, the disulfide bond which can form in the large chain dimeric partners within the hexadecamer appears to be associated with oxidative stress and protein turnover.

The protein localises to the plastid. It is found in the chloroplast. The enzyme catalyses 2 (2R)-3-phosphoglycerate + 2 H(+) = D-ribulose 1,5-bisphosphate + CO2 + H2O. It catalyses the reaction D-ribulose 1,5-bisphosphate + O2 = 2-phosphoglycolate + (2R)-3-phosphoglycerate + 2 H(+). In terms of biological role, ruBisCO catalyzes two reactions: the carboxylation of D-ribulose 1,5-bisphosphate, the primary event in carbon dioxide fixation, as well as the oxidative fragmentation of the pentose substrate in the photorespiration process. Both reactions occur simultaneously and in competition at the same active site. The protein is Ribulose bisphosphate carboxylase large chain of Phalaenopsis aphrodite subsp. formosana (Moth orchid).